The sequence spans 88 residues: Large ribosomal subunit protein bL31B (88 aa).

Belongs to the bacterial ribosomal protein bL31 family. Type B subfamily. As to quaternary structure, part of the 50S ribosomal subunit.

The sequence is that of Large ribosomal subunit protein bL31B from Leuconostoc mesenteroides subsp. mesenteroides (strain ATCC 8293 / DSM 20343 / BCRC 11652 / CCM 1803 / JCM 6124 / NCDO 523 / NBRC 100496 / NCIMB 8023 / NCTC 12954 / NRRL B-1118 / 37Y).